Consider the following 127-residue polypeptide: UPF0738 protein Bsph_1225 (127 aa).

Belongs to the UPF0738 family.

In Lysinibacillus sphaericus (strain C3-41), this protein is UPF0738 protein Bsph_1225.